Consider the following 247-residue polypeptide: Cytochrome c oxidase subunit 2 (247 aa).

Residues 1-11 (MLLIINNIINN) form the signal peptide. Topologically, residues 12–38 (DVPTPWGVYFQDSATPNHEGIIELHDN) are mitochondrial intermembrane. Residues 39–59 (IMFYLVLILCLVSWLLFSIVK) traverse the membrane as a helical segment. The Mitochondrial matrix segment spans residues 60-78 (DGSKNPLPHKYLVHGQTIE). A helical membrane pass occupies residues 79 to 101 (IIWTILPALVLLVIAFPSFILLY). The Mitochondrial intermembrane segment spans residues 102–247 (LCDEVISPAM…KEFLTWLNEQ (146 aa)). Cu cation-binding residues include histidine 182, cysteine 217, glutamate 219, cysteine 221, histidine 225, and methionine 228. Residue glutamate 219 participates in Mg(2+) binding.

This sequence belongs to the cytochrome c oxidase subunit 2 family. As to quaternary structure, component of the cytochrome c oxidase (complex IV, CIV), a multisubunit enzyme composed of a catalytic core of 3 subunits and several supernumerary subunits. The complex exists as a monomer or a dimer and forms supercomplexes (SCs) in the inner mitochondrial membrane with ubiquinol-cytochrome c oxidoreductase (cytochrome b-c1 complex, complex III, CIII). Cu cation serves as cofactor. In terms of processing, the signal sequence of COX2 is processed by IMP1.

It localises to the mitochondrion inner membrane. It carries out the reaction 4 Fe(II)-[cytochrome c] + O2 + 8 H(+)(in) = 4 Fe(III)-[cytochrome c] + 2 H2O + 4 H(+)(out). Functionally, component of the cytochrome c oxidase, the last enzyme in the mitochondrial electron transport chain which drives oxidative phosphorylation. The respiratory chain contains 3 multisubunit complexes succinate dehydrogenase (complex II, CII), ubiquinol-cytochrome c oxidoreductase (cytochrome b-c1 complex, complex III, CIII) and cytochrome c oxidase (complex IV, CIV), that cooperate to transfer electrons derived from NADH and succinate to molecular oxygen, creating an electrochemical gradient over the inner membrane that drives transmembrane transport and the ATP synthase. Cytochrome c oxidase is the component of the respiratory chain that catalyzes the reduction of oxygen to water. Electrons originating from reduced cytochrome c in the intermembrane space (IMS) are transferred via the dinuclear copper A center (CU(A)) of subunit 2 and heme A of subunit 1 to the active site in subunit 1, a binuclear center (BNC) formed by heme A3 and copper B (CU(B)). The BNC reduces molecular oxygen to 2 water molecules using 4 electrons from cytochrome c in the IMS and 4 protons from the mitochondrial matrix. The chain is Cytochrome c oxidase subunit 2 (COX2) from Wickerhamomyces canadensis (Yeast).